The primary structure comprises 163 residues: uncharacterized protein (163 aa).

This is an uncharacterized protein from Mycoplasma pneumoniae (strain ATCC 29342 / M129 / Subtype 1) (Mycoplasmoides pneumoniae).